Consider the following 329-residue polypeptide: uncharacterized protein (329 aa).

This is an uncharacterized protein from Bacillus subtilis (strain 168).